A 301-amino-acid polypeptide reads, in one-letter code: RNA polymerase II holoenzyme cyclin-like subunit (301 aa).

A Cyclin N-terminal domain is found at Gln-53–Ser-142.

It belongs to the cyclin family. Cyclin C subfamily. In terms of assembly, component of the srb8-11 complex, a regulatory module of the Mediator complex.

The protein resides in the nucleus. Functionally, component of the srb8-11 complex. The srb8-11 complex is a regulatory module of the Mediator complex which is itself involved in regulation of basal and activated RNA polymerase II-dependent transcription. The srb8-11 complex may be involved in the transcriptional repression of a subset of genes regulated by Mediator. It may inhibit the association of the Mediator complex with RNA polymerase II to form the holoenzyme complex. The srb8-11 complex phosphorylates the C-terminal domain (CTD) of the largest subunit of RNA polymerase II. The protein is RNA polymerase II holoenzyme cyclin-like subunit (ssn8) of Aspergillus terreus (strain NIH 2624 / FGSC A1156).